A 482-amino-acid chain; its full sequence is ATP synthase subunit beta (482 aa).

162–169 provides a ligand contact to ATP; it reads GGAGVGKT.

Belongs to the ATPase alpha/beta chains family. F-type ATPases have 2 components, CF(1) - the catalytic core - and CF(0) - the membrane proton channel. CF(1) has five subunits: alpha(3), beta(3), gamma(1), delta(1), epsilon(1). CF(0) has four main subunits: a(1), b(1), b'(1) and c(9-12).

The protein localises to the cellular thylakoid membrane. It carries out the reaction ATP + H2O + 4 H(+)(in) = ADP + phosphate + 5 H(+)(out). Functionally, produces ATP from ADP in the presence of a proton gradient across the membrane. The catalytic sites are hosted primarily by the beta subunits. The sequence is that of ATP synthase subunit beta from Trichormus variabilis (strain ATCC 29413 / PCC 7937) (Anabaena variabilis).